A 453-amino-acid polypeptide reads, in one-letter code: Ribosomal protein uS12 methylthiotransferase RimO (453 aa).

Residues 9–124 (PKVGFVSLGC…VMEAVHTHLP (116 aa)) enclose the MTTase N-terminal domain. 6 residues coordinate [4Fe-4S] cluster: Cys-18, Cys-54, Cys-83, Cys-155, Cys-159, and Cys-162. Residues 141–382 (LTPKHYAYLK…MEVAERVSAR (242 aa)) form the Radical SAM core domain. One can recognise a TRAM domain in the interval 385 to 453 (QRKVGKSLRV…ADGHDLWGEV (69 aa)).

Belongs to the methylthiotransferase family. RimO subfamily. [4Fe-4S] cluster serves as cofactor.

It is found in the cytoplasm. The enzyme catalyses L-aspartate(89)-[ribosomal protein uS12]-hydrogen + (sulfur carrier)-SH + AH2 + 2 S-adenosyl-L-methionine = 3-methylsulfanyl-L-aspartate(89)-[ribosomal protein uS12]-hydrogen + (sulfur carrier)-H + 5'-deoxyadenosine + L-methionine + A + S-adenosyl-L-homocysteine + 2 H(+). Functionally, catalyzes the methylthiolation of an aspartic acid residue of ribosomal protein uS12. The protein is Ribosomal protein uS12 methylthiotransferase RimO of Ralstonia pickettii (strain 12J).